The primary structure comprises 729 residues: Fatty acid oxidation complex subunit alpha (729 aa).

The interval 1–189 (MLYKGDTLYL…KIGLVDGVVK (189 aa)) is enoyl-CoA hydratase/isomerase. Residue Asp296 coordinates substrate. Residues 311–729 (ETPKQAAVLG…ARPVGSLKTA (419 aa)) are 3-hydroxyacyl-CoA dehydrogenase. Residues Met324, Asp343, 400–402 (VVE), Lys407, and Ser429 each bind NAD(+). Catalysis depends on His450, which acts as the For 3-hydroxyacyl-CoA dehydrogenase activity. Asn453 lines the NAD(+) pocket. Substrate contacts are provided by Asn500 and Tyr660. Residues 708–729 (RHNEPYYPPVEPARPVGSLKTA) are disordered.

The protein in the N-terminal section; belongs to the enoyl-CoA hydratase/isomerase family. This sequence in the C-terminal section; belongs to the 3-hydroxyacyl-CoA dehydrogenase family. Heterotetramer of two alpha chains (FadB) and two beta chains (FadA).

It carries out the reaction a (3S)-3-hydroxyacyl-CoA + NAD(+) = a 3-oxoacyl-CoA + NADH + H(+). The enzyme catalyses a (3S)-3-hydroxyacyl-CoA = a (2E)-enoyl-CoA + H2O. It catalyses the reaction a 4-saturated-(3S)-3-hydroxyacyl-CoA = a (3E)-enoyl-CoA + H2O. The catalysed reaction is (3S)-3-hydroxybutanoyl-CoA = (3R)-3-hydroxybutanoyl-CoA. It carries out the reaction a (3Z)-enoyl-CoA = a 4-saturated (2E)-enoyl-CoA. The enzyme catalyses a (3E)-enoyl-CoA = a 4-saturated (2E)-enoyl-CoA. It participates in lipid metabolism; fatty acid beta-oxidation. Involved in the aerobic and anaerobic degradation of long-chain fatty acids via beta-oxidation cycle. Catalyzes the formation of 3-oxoacyl-CoA from enoyl-CoA via L-3-hydroxyacyl-CoA. It can also use D-3-hydroxyacyl-CoA and cis-3-enoyl-CoA as substrate. This is Fatty acid oxidation complex subunit alpha from Salmonella enteritidis PT4 (strain P125109).